The chain runs to 256 residues: Imidazole glycerol phosphate synthase subunit HisF (256 aa).

Active-site residues include D12 and D131.

Belongs to the HisA/HisF family. Heterodimer of HisH and HisF.

Its subcellular location is the cytoplasm. It catalyses the reaction 5-[(5-phospho-1-deoxy-D-ribulos-1-ylimino)methylamino]-1-(5-phospho-beta-D-ribosyl)imidazole-4-carboxamide + L-glutamine = D-erythro-1-(imidazol-4-yl)glycerol 3-phosphate + 5-amino-1-(5-phospho-beta-D-ribosyl)imidazole-4-carboxamide + L-glutamate + H(+). It functions in the pathway amino-acid biosynthesis; L-histidine biosynthesis; L-histidine from 5-phospho-alpha-D-ribose 1-diphosphate: step 5/9. In terms of biological role, IGPS catalyzes the conversion of PRFAR and glutamine to IGP, AICAR and glutamate. The HisF subunit catalyzes the cyclization activity that produces IGP and AICAR from PRFAR using the ammonia provided by the HisH subunit. This chain is Imidazole glycerol phosphate synthase subunit HisF, found in Pseudomonas paraeruginosa (strain DSM 24068 / PA7) (Pseudomonas aeruginosa (strain PA7)).